Consider the following 421-residue polypeptide: Vasopressin V1b receptor (421 aa).

Residues 1 to 35 (MDSEPSWTATPSPGGTLFVPNTTTPWLGRDEELAK) lie on the Extracellular side of the membrane. Residue Asn21 is glycosylated (N-linked (GlcNAc...) asparagine). The helical transmembrane segment at 36–59 (VEIGILATVLVLATGGNLAVLLIL) threads the bilayer. Topologically, residues 60 to 71 (GLQGHKRSRMHL) are cytoplasmic. The helical transmembrane segment at 72–93 (FVLHLALTDLGVALFQVLPQLL) threads the bilayer. The Extracellular segment spans residues 94–108 (WDITYRFQGSDLLCR). Cys107 and Cys186 form a disulfide bridge. Residues 109–130 (AVKYLQVLSMFASTYMLLAMTL) traverse the membrane as a helical segment. Topologically, residues 131 to 151 (DRYLAVCHPLRSLQQPSQSTY) are cytoplasmic. The chain crosses the membrane as a helical span at residues 152 to 173 (PLIAAPWLLAAILSLPQVFIFS). Residues 174-202 (LREVIQGSGVLDCWADFYFSWGPRAYITW) are Extracellular-facing. The helical transmembrane segment at 203-223 (TTMAIFVLPVVVLTACYGLIC) threads the bilayer. Residues 224–280 (HEIYKNLKVKTQAGREERRGWPKSSSSAAAAATRGLPSRVSSISTISRAKIRTVKMT) lie on the Cytoplasmic side of the membrane. The helical transmembrane segment at 281 to 300 (FVIVLAYIACWAPFFSVQMW) threads the bilayer. At 301–318 (SVWDENAPNEDSTNVAFT) the chain is on the extracellular side. Residues 319-338 (ISMLLGNLSSCCNPWIYMGF) form a helical membrane-spanning segment. Residues 339–421 (NSHLLPRSLS…GEATMETSIS (83 aa)) are Cytoplasmic-facing. Residues 399–421 (KPAGSLKDLEQVDGEATMETSIS) are disordered.

It belongs to the G-protein coupled receptor 1 family. Vasopressin/oxytocin receptor subfamily.

It localises to the cell membrane. Receptor for arginine vasopressin. The activity of this receptor is mediated by G proteins which activate a phosphatidyl-inositol-calcium second messenger system. The polypeptide is Vasopressin V1b receptor (Avpr1b) (Mus musculus (Mouse)).